A 156-amino-acid chain; its full sequence is Large ribosomal subunit protein uL15 (156 aa).

Positions 25 to 48 (RGIGCGKGKTSGRGHKGQKARSGV) are disordered. Residues 34–43 (TSGRGHKGQK) show a composition bias toward basic residues.

Belongs to the universal ribosomal protein uL15 family. Part of the 50S ribosomal subunit.

In terms of biological role, binds to the 23S rRNA. This Wolbachia pipientis subsp. Culex pipiens (strain wPip) protein is Large ribosomal subunit protein uL15.